The chain runs to 341 residues: UPF0283 membrane protein HD_1769 (341 aa).

Helical transmembrane passes span 57–77 (LLAVLVLFGLAVIARSVQCLI), 86–106 (IDLAFAIVFFMVSLAGIGAII), and 204–224 (ENAIIVAVSPLVIVDMLMIAW).

Belongs to the UPF0283 family.

It localises to the cell inner membrane. This chain is UPF0283 membrane protein HD_1769, found in Haemophilus ducreyi (strain 35000HP / ATCC 700724).